Here is a 940-residue protein sequence, read N- to C-terminus: Chromatin assembly factor 1 subunit FSM (940 aa).

Disordered regions lie at residues 317-473 (NVDD…DPCT), 638-682 (VDSD…FFVP), and 919-940 (KTTQNVNGDTDIPRINLLPSSQ). Residues 320 to 329 (DSQLQKNTST) show a composition bias toward polar residues. Residues 329–439 (TNEKDTQKAQ…LKKQLAIQKQ (111 aa)) are a coiled coil. The segment covering 330–429 (NEKDTQKAQK…QKRREKEAVQ (100 aa)) has biased composition (basic and acidic residues). Low complexity predominate over residues 430 to 440 (LKKQLAIQKQA). The segment covering 445–461 (RFFKNKKDSEKLEKPGG) has biased composition (basic and acidic residues). The segment covering 638-650 (VDSDDEWEEEDPG) has biased composition (acidic residues).

Belongs to the CHAF1A family. As to quaternary structure, component of the chromatin assembly factor 1 (CAF-1) complex, composed of FSM (FAS1), FAS2 and MSI1. In embryo, expressed in leaf primordia, coleoptile and radicle. In seedlings, expressed in cell division zone of roots, SAM and leaf primordia. Expressed in floral organ primordia.

Its subcellular location is the nucleus. In terms of biological role, component of the chromatin assembly factor complex (CAF-1) involved in chromatin assembly following DNA replication and DNA repair. Required for several aspects of development, including apical meristem maintenance by regulating the durations of the S- and G2-phases of the cell cycle through its chromatin assembly activity. The polypeptide is Chromatin assembly factor 1 subunit FSM (FSM) (Oryza sativa subsp. japonica (Rice)).